Consider the following 742-residue polypeptide: Ectonucleotide pyrophosphatase/phosphodiesterase 1 (742 aa).

Topologically, residues 1–113 are cytoplasmic; the sequence is MELQNDLESL…TGFHSKVPFK (113 aa). Residues 114–134 traverse the membrane as a helical segment; it reads IIFRTLFGSLVFAIFLILMIN. Topologically, residues 135–742 are extracellular; the sequence is IAKPHHSTRV…SIDDLVDSDT (608 aa). N-linked (GlcNAc...) asparagine glycans are attached at residues N161 and N204. A phosphodiesterase region spans residues 168–545; sequence PLTIVISLDG…VFTIGSHGYD (378 aa). T219 acts as the Nucleophile in catalysis. N264, N296, and N403 each carry an N-linked (GlcNAc...) asparagine glycan. The segment covering 640 to 659 has biased composition (acidic residues); sequence EETEQDNVDNDNDDNDDGNT. 2 disordered regions span residues 640-670 and 686-711; these read EETEQDNVDNDNDDNDDGNTDEIAAMPSSSL and TLLGETSPSSRSSSSSSIQASATAST. Positions 691–711 are enriched in low complexity; the sequence is TSPSSRSSSSSSIQASATAST.

Belongs to the nucleotide pyrophosphatase/phosphodiesterase family. In terms of processing, autophosphorylated as part of the catalytic cycle of phosphodiesterase/pyrophosphatase activity. Post-translationally, N-glycosylated.

Its subcellular location is the membrane. The catalysed reaction is Hydrolytically removes 5'-nucleotides successively from the 3'-hydroxy termini of 3'-hydroxy-terminated oligonucleotides.. It carries out the reaction a ribonucleoside 5'-triphosphate + H2O = a ribonucleoside 5'-phosphate + diphosphate + H(+). It catalyses the reaction a 2'-deoxyribonucleoside 5'-triphosphate + H2O = a 2'-deoxyribonucleoside 5'-phosphate + diphosphate + H(+). In terms of biological role, mediates extracellular nucleotide derived phosphate hydrolysis along with NPP2 and PHO5. The polypeptide is Ectonucleotide pyrophosphatase/phosphodiesterase 1 (NPP1) (Saccharomyces cerevisiae (strain ATCC 204508 / S288c) (Baker's yeast)).